The chain runs to 406 residues: Multifunctional CCA protein (406 aa).

Residues glycine 8 and arginine 11 each coordinate ATP. CTP contacts are provided by glycine 8 and arginine 11. Positions 21 and 23 each coordinate Mg(2+). Residues arginine 91, arginine 138, and arginine 141 each coordinate ATP. Residues arginine 91, arginine 138, and arginine 141 each coordinate CTP. An HD domain is found at 229-331 (TGIHQEMVSD…LELLGRCDAL (103 aa)).

Belongs to the tRNA nucleotidyltransferase/poly(A) polymerase family. Bacterial CCA-adding enzyme type 1 subfamily. In terms of assembly, monomer. Can also form homodimers and oligomers. Mg(2+) is required as a cofactor. It depends on Ni(2+) as a cofactor.

The enzyme catalyses a tRNA precursor + 2 CTP + ATP = a tRNA with a 3' CCA end + 3 diphosphate. The catalysed reaction is a tRNA with a 3' CCA end + 2 CTP + ATP = a tRNA with a 3' CCACCA end + 3 diphosphate. In terms of biological role, catalyzes the addition and repair of the essential 3'-terminal CCA sequence in tRNAs without using a nucleic acid template. Adds these three nucleotides in the order of C, C, and A to the tRNA nucleotide-73, using CTP and ATP as substrates and producing inorganic pyrophosphate. tRNA 3'-terminal CCA addition is required both for tRNA processing and repair. Also involved in tRNA surveillance by mediating tandem CCA addition to generate a CCACCA at the 3' terminus of unstable tRNAs. While stable tRNAs receive only 3'-terminal CCA, unstable tRNAs are marked with CCACCA and rapidly degraded. This Stenotrophomonas maltophilia (strain R551-3) protein is Multifunctional CCA protein.